The sequence spans 559 residues: Glycerol kinase (559 aa).

Residue threonine 20 participates in ADP binding. Residues threonine 20, serine 21, and serine 22 each contribute to the ATP site. A sn-glycerol 3-phosphate-binding site is contributed by threonine 20. Residue arginine 24 coordinates ADP. Positions 94, 95, and 148 each coordinate sn-glycerol 3-phosphate. The glycerol site is built by arginine 94, glutamate 95, and tyrosine 148. Glycine 252 serves as a coordination point for beta-D-fructose 1,6-bisphosphate. A sn-glycerol 3-phosphate-binding site is contributed by aspartate 265. Positions 265 and 266 each coordinate glycerol. The ADP site is built by threonine 287, glycine 332, glycine 433, and asparagine 437. ATP contacts are provided by threonine 287, glycine 332, and glycine 433. Glutamate 501 is a Zn(2+) binding site. A helical membrane pass occupies residues isoleucine 532–alanine 552.

It belongs to the FGGY kinase family.

The protein localises to the mitochondrion outer membrane. It localises to the nucleus. The protein resides in the cytoplasm. It is found in the cytosol. It carries out the reaction glycerol + ATP = sn-glycerol 3-phosphate + ADP + H(+). It participates in polyol metabolism; glycerol degradation via glycerol kinase pathway; sn-glycerol 3-phosphate from glycerol: step 1/1. Functionally, kinase that plays a key role in glycerol metabolism, catalyzing its phosphorylation to produce sn-glycerol 3-phosphate. Sn-glycerol 3-phosphate is a crucial intermediate in various metabolic pathways, such as the synthesis of glycerolipids and triglycerides, glycogenesis, glycolysis and gluconeogenesis. The sequence is that of Glycerol kinase from Bos taurus (Bovine).